The primary structure comprises 366 residues: Aminomethyltransferase (366 aa).

It belongs to the GcvT family. As to quaternary structure, the glycine cleavage system is composed of four proteins: P, T, L and H.

It carries out the reaction N(6)-[(R)-S(8)-aminomethyldihydrolipoyl]-L-lysyl-[protein] + (6S)-5,6,7,8-tetrahydrofolate = N(6)-[(R)-dihydrolipoyl]-L-lysyl-[protein] + (6R)-5,10-methylene-5,6,7,8-tetrahydrofolate + NH4(+). Its function is as follows. The glycine cleavage system catalyzes the degradation of glycine. The sequence is that of Aminomethyltransferase from Bordetella bronchiseptica (strain ATCC BAA-588 / NCTC 13252 / RB50) (Alcaligenes bronchisepticus).